The primary structure comprises 365 residues: N5-carboxyaminoimidazole ribonucleotide synthase (365 aa).

ATP-binding positions include R93, K132, 137-143 (GYDGKGQ), 168-171 (EEFV), E176, H199, and 249-250 (NE). An ATP-grasp domain is found at 97 to 279 (KLFLKKHGFP…QFENLLRAIT (183 aa)).

Belongs to the PurK/PurT family. In terms of assembly, homodimer.

The enzyme catalyses 5-amino-1-(5-phospho-beta-D-ribosyl)imidazole + hydrogencarbonate + ATP = 5-carboxyamino-1-(5-phospho-D-ribosyl)imidazole + ADP + phosphate + 2 H(+). It participates in purine metabolism; IMP biosynthesis via de novo pathway; 5-amino-1-(5-phospho-D-ribosyl)imidazole-4-carboxylate from 5-amino-1-(5-phospho-D-ribosyl)imidazole (N5-CAIR route): step 1/2. Its function is as follows. Catalyzes the ATP-dependent conversion of 5-aminoimidazole ribonucleotide (AIR) and HCO(3)(-) to N5-carboxyaminoimidazole ribonucleotide (N5-CAIR). The protein is N5-carboxyaminoimidazole ribonucleotide synthase of Aquifex aeolicus (strain VF5).